Here is a 740-residue protein sequence, read N- to C-terminus: MPSTSLPYTQMAFHMPLKELQPVDTSLPEHIIKGAVVIDKELTTWNRRAVIPSTALHTVFITINRLEQKQADVVKMAAREMNLPEDNTYGLMADAPKRFITNENIDQLGSGFILTLCASPDNYVKRITEILEDGKNIAQMENAVKTLDEFSLDPALIEAFYRCSSLELLFDLVRDDRVSMSYTLLSTCLRALSSILELAVGDVTWKSVPRDVVVSIAALVTGKAKREEVNTLLAALAMIEQLVIGDDTTRDWVLEEVPIETLIRHVEKSDERIALAALSLMNSMIRHCSDKDKRLELIESLEVVPFRNAVHSSLLRDGSARDPKALEQLVEVQRSLISAYDTSPASDSEIQKVLDIDSANENSEEDVEIWRTKLAEHRCGRLATVAMVLFGEKSPQDLRMLISENTMRIEGGKWQLIPMWMRCCDITAELFGLLPGRDELDRLISIIFSTDSPFPAVFSCIVHLFHRTWREMQAKGGEMDKVASFVLEQLRHVLKRKEIHDVEEMSADLETFSYKAMQEVRREEQLEKENDQLHSEAVISLKAKLRPKIEELVRINHLNYLKKGDVFRKPMKSKSLAKAAYWFWKLDASEKMLTITACDGERFVDDGHRDDIRQVWLKDVADVTNNDEIDRKASSSRFASSPSTNMLRGVRVQLKPTNDLKEGEVLMALTPDETQAGIWQESLAYLVGNTEMRSKTNAIVERMLKMELRVRLLNVKLADPENEPDVPPIPDDLISFISSF.

In terms of domain architecture, ELMO spans 348-494 (SEIQKVLDID…FVLEQLRHVL (147 aa)). Residues 555–690 (INHLNYLKKG…ESLAYLVGNT (136 aa)) are required for punctate localization, cell corpse engulfment and distal cell tip migration. The SH3-binding motif lies at 724 to 727 (PDVP).

In terms of assembly, interacts with psr-1. Forms a ternary complex with ced-2 and ced-5.

The protein resides in the cytoplasm. Involved in apoptosis and necrosis. Required for the cell corpse engulfment process. Has roles in the formation of actin halos and distal tip cell migration. Plays no role in amphid axon outgrowth. The polypeptide is Cell death abnormality protein 12 (Caenorhabditis briggsae).